The following is a 362-amino-acid chain: 3-isopropylmalate dehydrogenase (362 aa).

NAD(+) is bound at residue 78-91 (GYKWDSLPPHQRPE). Arginine 98, arginine 108, arginine 136, and aspartate 226 together coordinate substrate. Positions 226, 250, and 254 each coordinate Mg(2+). Position 284-296 (284-296 (GSAPDIAGLDKAN)) interacts with NAD(+).

This sequence belongs to the isocitrate and isopropylmalate dehydrogenases family. LeuB type 1 subfamily. In terms of assembly, homodimer. Requires Mg(2+) as cofactor. Mn(2+) is required as a cofactor.

The protein localises to the cytoplasm. It catalyses the reaction (2R,3S)-3-isopropylmalate + NAD(+) = 4-methyl-2-oxopentanoate + CO2 + NADH. Its pathway is amino-acid biosynthesis; L-leucine biosynthesis; L-leucine from 3-methyl-2-oxobutanoate: step 3/4. Functionally, catalyzes the oxidation of 3-carboxy-2-hydroxy-4-methylpentanoate (3-isopropylmalate) to 3-carboxy-4-methyl-2-oxopentanoate. The product decarboxylates to 4-methyl-2 oxopentanoate. The chain is 3-isopropylmalate dehydrogenase from Trichormus variabilis (strain ATCC 29413 / PCC 7937) (Anabaena variabilis).